The chain runs to 265 residues: Mlc titration factor A (265 aa).

Zn(2+) is bound by residues H111, H148, H152, and E211.

This sequence belongs to the MtfA family. Interacts with Mlc. Zn(2+) is required as a cofactor.

The protein localises to the cytoplasm. In terms of biological role, involved in the modulation of the activity of the glucose-phosphotransferase system (glucose-PTS). Interacts with the transcriptional repressor Mlc, preventing its interaction with DNA and leading to the modulation of expression of genes regulated by Mlc, including ptsG, which encodes the PTS system glucose-specific EIICB component. Functionally, shows zinc-dependent metallopeptidase activity. The sequence is that of Mlc titration factor A from Salmonella gallinarum (strain 287/91 / NCTC 13346).